Here is a 776-residue protein sequence, read N- to C-terminus: DNA ligase (776 aa).

NAD(+)-binding positions include 31 to 35 (DAEYD), 80 to 81 (SL), and Glu112. Catalysis depends on Lys114, which acts as the N6-AMP-lysine intermediate. The NAD(+) site is built by Arg135, Glu172, Lys288, and Lys312. Residues Cys406, Cys409, Cys436, and Cys442 each contribute to the Zn(2+) site. Residues 693 to 776 (AEGLPLAGQT…TFLAEQGIAV (84 aa)) enclose the BRCT domain.

It belongs to the NAD-dependent DNA ligase family. LigA subfamily. Mg(2+) serves as cofactor. It depends on Mn(2+) as a cofactor.

The enzyme catalyses NAD(+) + (deoxyribonucleotide)n-3'-hydroxyl + 5'-phospho-(deoxyribonucleotide)m = (deoxyribonucleotide)n+m + AMP + beta-nicotinamide D-nucleotide.. Functionally, DNA ligase that catalyzes the formation of phosphodiester linkages between 5'-phosphoryl and 3'-hydroxyl groups in double-stranded DNA using NAD as a coenzyme and as the energy source for the reaction. It is essential for DNA replication and repair of damaged DNA. This is DNA ligase from Pseudomonas putida (strain ATCC 47054 / DSM 6125 / CFBP 8728 / NCIMB 11950 / KT2440).